A 1037-amino-acid polypeptide reads, in one-letter code: Ras guanine nucleotide exchange factor E (1037 aa).

Positions 5 to 35 (ECNNRIEYLQNKVLELESLNENLKGQLEYFQ) form a coiled coil. Disordered regions lie at residues 65 to 100 (NNNN…TTNN), 114 to 150 (TNSN…ELSN), 166 to 387 (TTTT…PLSN), 414 to 437 (TVNM…LYHS), 451 to 472 (SSLS…LTNP), 602 to 628 (INSN…NQLE), 907 to 935 (NTTT…QQLN), and 1004 to 1037 (EKET…SFKS). 2 stretches are compositionally biased toward low complexity: residues 114–145 (TNSN…NNSN) and 166–200 (TTTT…NNNN). A compositionally biased stretch (polar residues) spans 229-239 (PTSSRNSPTNK). Low complexity predominate over residues 240 to 276 (SSPQFLSPLSKSPLSQSTQSTTVSSPSPSWTTTVPQS). A compositionally biased stretch (polar residues) spans 282–300 (TIVQSKSPYSPDTNISNKL). A compositionally biased stretch (low complexity) spans 318–360 (SPSKNSPRSLNSNNNNSSATTSITTPPTTSTPTPTTSTTTTTT). The segment covering 361-370 (TERRPEDRRS) has biased composition (basic and acidic residues). 2 stretches are compositionally biased toward polar residues: residues 372 to 387 (TSPF…PLSN) and 424 to 437 (PRSN…LYHS). The 199-residue stretch at 496 to 694 (NGFIVKGGTI…NLKRLLTNDR (199 aa)) folds into the N-terminal Ras-GEF domain. The region spanning 726–1003 (DPTEIARQLT…YKLSLICEPK (278 aa)) is the Ras-GEF domain. The segment covering 907–930 (NTTTTTTTTTTTTTTNTTTSNNNN) has biased composition (low complexity). Positions 1027–1037 (SVTSLLNSFKS) are enriched in polar residues.

In terms of biological role, promotes the exchange of Ras-bound GDP by GTP. Seems to play a role in chemotaxis. The chain is Ras guanine nucleotide exchange factor E (gefE) from Dictyostelium discoideum (Social amoeba).